The following is a 212-amino-acid chain: Putative tyrosine-protein phosphatase R622 (212 aa).

One can recognise a Tyrosine-protein phosphatase domain in the interval Lys9–Asn191. Residue Cys135 is the Phosphocysteine intermediate of the active site.

It belongs to the protein-tyrosine phosphatase family. Non-receptor class dual specificity subfamily.

The enzyme catalyses O-phospho-L-tyrosyl-[protein] + H2O = L-tyrosyl-[protein] + phosphate. This chain is Putative tyrosine-protein phosphatase R622, found in Acanthamoeba polyphaga mimivirus (APMV).